An 89-amino-acid polypeptide reads, in one-letter code: Cytochrome c oxidase subunit 7A, mitochondrial (89 aa).

The transit peptide at methionine 1–glycine 31 directs the protein to the mitochondrion. The Mitochondrial matrix portion of the chain corresponds to tyrosine 32 to aspartate 58. Residues asparagine 59–tyrosine 81 traverse the membrane as a helical segment. Residues glutamate 82–glutamate 89 lie on the Mitochondrial intermembrane side of the membrane.

This sequence belongs to the cytochrome c oxidase VIIa family. Component of the cytochrome c oxidase (complex IV, CIV), a multisubunit enzyme composed of a catalytic core of 3 subunits and several supernumerary subunits. The complex exists as a monomer or a dimer and forms supercomplexes (SCs) in the inner mitochondrial membrane with ubiquinol-cytochrome c oxidoreductase (cytochrome b-c1 complex, complex III, CIII).

The protein resides in the mitochondrion inner membrane. It functions in the pathway energy metabolism; oxidative phosphorylation. Functionally, component of the cytochrome c oxidase, the last enzyme in the mitochondrial electron transport chain which drives oxidative phosphorylation. The respiratory chain contains 3 multisubunit complexes succinate dehydrogenase (complex II, CII), ubiquinol-cytochrome c oxidoreductase (cytochrome b-c1 complex, complex III, CIII) and cytochrome c oxidase (complex IV, CIV), that cooperate to transfer electrons derived from NADH and succinate to molecular oxygen, creating an electrochemical gradient over the inner membrane that drives transmembrane transport and the ATP synthase. Cytochrome c oxidase is the component of the respiratory chain that catalyzes the reduction of oxygen to water. Electrons originating from reduced cytochrome c in the intermembrane space (IMS) are transferred via the dinuclear copper A center (CU(A)) of subunit 2 and heme A of subunit 1 to the active site in subunit 1, a binuclear center (BNC) formed by heme A3 and copper B (CU(B)). The BNC reduces molecular oxygen to 2 water molecules using 4 electrons from cytochrome c in the IMS and 4 protons from the mitochondrial matrix. The protein is Cytochrome c oxidase subunit 7A, mitochondrial of Drosophila melanogaster (Fruit fly).